A 312-amino-acid polypeptide reads, in one-letter code: Glyoxylate/hydroxypyruvate reductase A (312 aa).

The active site involves Arg-227. His-275 serves as the catalytic Proton donor.

Belongs to the D-isomer specific 2-hydroxyacid dehydrogenase family. GhrA subfamily.

The protein localises to the cytoplasm. The enzyme catalyses glycolate + NADP(+) = glyoxylate + NADPH + H(+). It carries out the reaction (R)-glycerate + NAD(+) = 3-hydroxypyruvate + NADH + H(+). It catalyses the reaction (R)-glycerate + NADP(+) = 3-hydroxypyruvate + NADPH + H(+). Functionally, catalyzes the NADPH-dependent reduction of glyoxylate and hydroxypyruvate into glycolate and glycerate, respectively. In Salmonella agona (strain SL483), this protein is Glyoxylate/hydroxypyruvate reductase A.